Here is a 595-residue protein sequence, read N- to C-terminus: P2X purinoceptor 7 (595 aa).

The Cytoplasmic segment spans residues 1-22 (MPACCSWNDVLQYETNKVTRIQ). Residue C4 is the site of S-palmitoyl cysteine attachment. Residues 23 to 46 (STNYGTVKWVLHMIVFSYISFALV) traverse the membrane as a helical segment. Residues 47 to 328 (SDKLYQRKEP…ILVFGTGGKF (282 aa)) are Extracellular-facing. N74 carries an N-linked (GlcNAc...) asparagine glycan. Cystine bridges form between C119/C168, C129/C152, and C135/C162. ADP-ribosylarginine; by ART2B is present on residues R125 and R133. N187 is a glycosylation site (N-linked (GlcNAc...) asparagine). T189 contributes to the ATP binding site. N202 and N213 each carry an N-linked (GlcNAc...) asparagine glycan. Cysteines 216 and 226 form a disulfide. Residue N241 is glycosylated (N-linked (GlcNAc...) asparagine). The cysteines at positions 260 and 269 are disulfide-linked. Residues R294 and K311 each contribute to the ATP site. A helical membrane pass occupies residues 329–353 (DIIQLVVYIGSTLSYFGLATVCIDL). S342 contributes to the Na(+) binding site. Residues 354 to 595 (LINTYSSAFC…GQYSGFKYPY (242 aa)) are Cytoplasmic-facing. The tract at residues 360–377 (SAFCRSGVYPYCKCCEPC) is C-cys anchor. Residues C363, C374, and C377 are each lipidated (S-palmitoyl cysteine). S390 is modified (phosphoserine). The segment at 395-595 (KPTLKYVSFV…GQYSGFKYPY (201 aa)) is cytoplasmic ballast. 3 residues coordinate Zn(2+): C479, C499, and C506. GTP is bound by residues R546, H547, Y550, and A567. Zn(2+) is bound at residue C572. Residues K583, S589, and G590 each coordinate GTP.

It belongs to the P2X receptor family. In terms of assembly, homotrimers. Interacts with LAMA3, ITGB2, ACTB, ACTN4, SVIL, MPP3, HSPA1, HSPCB, HSPA8, PIK230 and PTPRB. Interacts (via C-terminus) with EMP2. Post-translationally, phosphorylation results in its inactivation. In terms of processing, ADP-ribosylation at Arg-125 is necessary and sufficient to activate P2RX7 and gate the channel. Palmitoylation of several cysteines in the C-terminal cytoplasmic tail is required for efficient localization to cell surface. Palmitoylation prevents channel desensitization by physically anchoring the palmitoylated groups to the membrane.

The protein localises to the cell membrane. It carries out the reaction Ca(2+)(in) = Ca(2+)(out). The enzyme catalyses K(+)(in) = K(+)(out). The catalysed reaction is Na(+)(in) = Na(+)(out). Its activity is regulated as follows. Activated by high extracellular ATP levels (0.1-2.5 mM). The synthetic analog 2'(3')-O-(4-benzoylbenzoyl)ATP (BzATP) acts as a potent agonist. Does not undergo desensitization, instead, undergoes a facilitation process where currents progressively increase with repetitive or prolonged agonist application. Palmitoylation prevents channel desensitization. The permeability of the P2RX7 channel is modulated by the amount of cholesterol in the plasma membrane. In terms of biological role, ATP-gated nonselective transmembrane cation channel. Requires high millimolar-range concentrations of ATP to become activated. ATP binding trigers the rapid opening of the channel and allows Na(+) and Ca(2+) influx and K(+) efflux. Has also the ability to form a large pore in the cell membrane, allowing the passage of large cationic molecules. In microglia, may mediate NADPH transport across the plasma membrane. In immune cells, P2RX7 acts as a molecular sensor in pathological inflammatory states by detecting and responding to high local concentrations of extracellar ATP. In microglial cells, P2RX7 activation leads to the release of pro-inflammatory cytokines, such as IL-1beta and IL-18, through the activation of the NLRP3 inflammasome and caspase-1. Cooperates with KCNK6 to activate NLRP3 inflammasome. Activates death pathways leading to apoptosis and autophagy. Activates death pathways leading to pyroptosis. This chain is P2X purinoceptor 7 (P2rx7), found in Mus musculus (Mouse).